The sequence spans 296 residues: MFGAFVSHRLWSDSGCTTTCIANSIANYVAFGEQIEFPFKSAQVFIAGPRKAVINIQEEDKAELSKMIAKHNLWVVAHGTYLDVPWSSRSAFVTHFIHQELLICKEVGIKGLVLHLGAVEPELIVEGLKKIKPVEEVVIYLETPHNKHHAYKYSTIEQIKELFLRIRNSRLKHIGLCIDTAHIWSSGVNISGYNDAGQWLRSLENIHSVIPPSHIMFHLNDAATECGSGIDRHASLFEGMIWKSYSHKIKHSGLYCFVEYITRHQCPAILERNLGSSMQLQTALTTEFHTLKSLLK.

Cysteine 16 and cysteine 20 form a disulfide bridge. Residues histidine 78, histidine 115, glutamate 142, histidine 182, histidine 218, aspartate 231, histidine 233, and glutamate 271 each coordinate Zn(2+).

It belongs to the AP endonuclease 2 family. Zn(2+) serves as cofactor.

The protein localises to the host nucleus. Its subcellular location is the host cytoplasm. It is found in the virion. Endonuclease of the viral base excision repair system that catalyzes DNA cleavage reaction at the apurinic or apyrimidinic sites (AP sites). Cleaves phosphodiester bonds on the 5' side of AP sites. In addition to endonuclease activity, the AP endonuclease has a proofreading 3'-5' exonuclease activity that is considerably more efficient in the elimination of a mismatch than in that of a correctly paired base. Displays 3'-phosphatase and 3'-repair diesterase activities. The single nucleotide gaps generated by the AP endonuclease are filled by the viral repair DNA polymerase X and the DNA ligase. The protein is Probable AP endonuclease of Ornithodoros (relapsing fever ticks).